Consider the following 214-residue polypeptide: Thiamine-phosphate synthase (214 aa).

Residues 37–41 (QYREK) and N73 each bind 4-amino-2-methyl-5-(diphosphooxymethyl)pyrimidine. Residues D74 and D93 each coordinate Mg(2+). Residue S112 coordinates 4-amino-2-methyl-5-(diphosphooxymethyl)pyrimidine. 2-[(2R,5Z)-2-carboxy-4-methylthiazol-5(2H)-ylidene]ethyl phosphate is bound at residue 139–141 (TIS). K142 contacts 4-amino-2-methyl-5-(diphosphooxymethyl)pyrimidine. 2-[(2R,5Z)-2-carboxy-4-methylthiazol-5(2H)-ylidene]ethyl phosphate is bound by residues G171 and 191–192 (IS).

This sequence belongs to the thiamine-phosphate synthase family. The cofactor is Mg(2+).

The catalysed reaction is 2-[(2R,5Z)-2-carboxy-4-methylthiazol-5(2H)-ylidene]ethyl phosphate + 4-amino-2-methyl-5-(diphosphooxymethyl)pyrimidine + 2 H(+) = thiamine phosphate + CO2 + diphosphate. The enzyme catalyses 2-(2-carboxy-4-methylthiazol-5-yl)ethyl phosphate + 4-amino-2-methyl-5-(diphosphooxymethyl)pyrimidine + 2 H(+) = thiamine phosphate + CO2 + diphosphate. It catalyses the reaction 4-methyl-5-(2-phosphooxyethyl)-thiazole + 4-amino-2-methyl-5-(diphosphooxymethyl)pyrimidine + H(+) = thiamine phosphate + diphosphate. It participates in cofactor biosynthesis; thiamine diphosphate biosynthesis; thiamine phosphate from 4-amino-2-methyl-5-diphosphomethylpyrimidine and 4-methyl-5-(2-phosphoethyl)-thiazole: step 1/1. Condenses 4-methyl-5-(beta-hydroxyethyl)thiazole monophosphate (THZ-P) and 2-methyl-4-amino-5-hydroxymethyl pyrimidine pyrophosphate (HMP-PP) to form thiamine monophosphate (TMP). The sequence is that of Thiamine-phosphate synthase from Listeria monocytogenes serotype 4b (strain F2365).